The sequence spans 875 residues: Alanine--tRNA ligase (875 aa).

Zn(2+) is bound by residues H564, H568, C666, and H670.

Belongs to the class-II aminoacyl-tRNA synthetase family. In terms of assembly, homotetramer. It depends on Zn(2+) as a cofactor.

The protein localises to the cytoplasm. The catalysed reaction is tRNA(Ala) + L-alanine + ATP = L-alanyl-tRNA(Ala) + AMP + diphosphate. Catalyzes the attachment of alanine to tRNA(Ala) in a two-step reaction: alanine is first activated by ATP to form Ala-AMP and then transferred to the acceptor end of tRNA(Ala). Also edits incorrectly charged Ser-tRNA(Ala) and Gly-tRNA(Ala) via its editing domain. In Serratia proteamaculans (strain 568), this protein is Alanine--tRNA ligase.